The following is a 576-amino-acid chain: Putative export ATP-binding/permease protein RF_0214 (576 aa).

Residues 20 to 303 form the ABC transmembrane type-1 domain; the sequence is LIIVMISLLS…IFELLSEIHL (284 aa). A run of 6 helical transmembrane segments spans residues 21 to 41, 61 to 81, 135 to 155, 158 to 178, 242 to 262, and 277 to 297; these read IIVMISLLSVSASLLLIGSVF, ILYICLLIIILSIASFFRSYF, FLSFFIRNSVMLIGGVTLMFF, FKLASIVIITIPILLIPLIKF, ALFFAISIAIIFLAITLVVWI, and IISFIYYAIIAGFSSGGIFEL. The ABC transporter domain maps to 336 to 572; sequence IEFKNVDFTY…SEIYRNICRE (237 aa). 371–378 contacts ATP; it reads GRSGGGKS.

This sequence belongs to the ABC transporter superfamily. Homodimer.

The protein resides in the cell inner membrane. Part of an ABC transporter complex. Transmembrane domains (TMD) form a pore in the inner membrane and the ATP-binding domain (NBD) is responsible for energy generation. This Rickettsia felis (strain ATCC VR-1525 / URRWXCal2) (Rickettsia azadi) protein is Putative export ATP-binding/permease protein RF_0214.